The sequence spans 890 residues: DNA mismatch repair protein MutS (890 aa).

Residue 607-614 (GPNMSGKS) coordinates ATP. A disordered region spans residues 832–851 (ESQLSFFGGEQSSKKQDKPL).

This sequence belongs to the DNA mismatch repair MutS family.

In terms of biological role, this protein is involved in the repair of mismatches in DNA. It is possible that it carries out the mismatch recognition step. This protein has a weak ATPase activity. The polypeptide is DNA mismatch repair protein MutS (Bacillus cereus (strain B4264)).